The following is a 466-amino-acid chain: Uronate isomerase (466 aa).

Belongs to the metallo-dependent hydrolases superfamily. Uronate isomerase family.

It carries out the reaction D-glucuronate = D-fructuronate. It catalyses the reaction aldehydo-D-galacturonate = keto-D-tagaturonate. Its pathway is carbohydrate metabolism; pentose and glucuronate interconversion. This is Uronate isomerase from Streptococcus pneumoniae (strain 70585).